Reading from the N-terminus, the 222-residue chain is Exosome complex component Rrp4 (222 aa).

The 69-residue stretch at 63 to 131 (NDSVIGKVVD…EVKKVKLGLH (69 aa)) folds into the S1 motif domain. In terms of domain architecture, KH spans 139–200 (EGGTLAYITP…EIVKRALEMI (62 aa)).

Belongs to the RRP4 family. As to quaternary structure, component of the archaeal exosome complex. Forms a trimer of Rrp4 and/or Csl4 subunits. The trimer associates with a hexameric ring-like arrangement composed of 3 Rrp41-Rrp42 heterodimers.

The protein resides in the cytoplasm. Non-catalytic component of the exosome, which is a complex involved in RNA degradation. Increases the RNA binding and the efficiency of RNA degradation. Confers strong poly(A) specificity to the exosome. The polypeptide is Exosome complex component Rrp4 (Methanothermus fervidus (strain ATCC 43054 / DSM 2088 / JCM 10308 / V24 S)).